The sequence spans 390 residues: GTPase Obg (390 aa).

The Obg domain maps to 1 to 159 (MKFVDEATIK…RELRLELLLL (159 aa)). An OBG-type G domain is found at 160 to 333 (ADVGMLGLPN…LCDELADFMD (174 aa)). GTP-binding positions include 166 to 173 (GLPNAGKS), 191 to 195 (FTTLI), 213 to 216 (DIPG), 283 to 286 (NKTD), and 314 to 316 (AAV). Serine 173 and threonine 193 together coordinate Mg(2+).

This sequence belongs to the TRAFAC class OBG-HflX-like GTPase superfamily. OBG GTPase family. As to quaternary structure, monomer. Mg(2+) is required as a cofactor.

The protein localises to the cytoplasm. Functionally, an essential GTPase which binds GTP, GDP and possibly (p)ppGpp with moderate affinity, with high nucleotide exchange rates and a fairly low GTP hydrolysis rate. Plays a role in control of the cell cycle, stress response, ribosome biogenesis and in those bacteria that undergo differentiation, in morphogenesis control. The chain is GTPase Obg from Aliivibrio fischeri (strain MJ11) (Vibrio fischeri).